Consider the following 372-residue polypeptide: MTSLNPTSNGKKVIVGMSGGVDSSVSAYLLMQQGFEVEGLFMKNWEEDDTDEYCAAADDLKDAQAVCDKLGIKMHTVNFAAEYWDNVFEYFLAEYKAGRTPNPDIMCNKEIKFKAFLEFADDILDADYIAMGHYVRRRDNSDGSVEMLRGVDGNKDQSYFLYTLSHEQVARSLFPVGELEKHQVREIAQKLGLITHDKKDSTGICFIGERKFTDFLATYLPAQPGDIETSEGEVIGTHQGLMYHTLGQRKGLGIGGLKNSNEDPWYVVEKDLVRNVLIVAQGGNHPRLMSTGMTVNQLHWVDRTGPANNSTITVKTRYRQRDVGCTLTYDDADNITVMFDEPVAAVTPGQSAVFYDGDICLGGGIIDTLIRG.

ATP is bound by residues 16–23 (GMSGGVDS) and methionine 42. Residues 102-104 (NPD) form an interaction with target base in tRNA region. Cysteine 107 serves as the catalytic Nucleophile. Cysteine 107 and cysteine 205 form a disulfide bridge. Glycine 132 lines the ATP pocket. The tract at residues 155–157 (KDQ) is interaction with tRNA. Catalysis depends on cysteine 205, which acts as the Cysteine persulfide intermediate. The tract at residues 317–318 (RY) is interaction with tRNA.

Belongs to the MnmA/TRMU family.

The protein localises to the cytoplasm. The enzyme catalyses S-sulfanyl-L-cysteinyl-[protein] + uridine(34) in tRNA + AH2 + ATP = 2-thiouridine(34) in tRNA + L-cysteinyl-[protein] + A + AMP + diphosphate + H(+). Functionally, catalyzes the 2-thiolation of uridine at the wobble position (U34) of tRNA, leading to the formation of s(2)U34. This Shewanella frigidimarina (strain NCIMB 400) protein is tRNA-specific 2-thiouridylase MnmA.